Consider the following 196-residue polypeptide: Probable malonic semialdehyde reductase RutE (196 aa).

Belongs to the nitroreductase family. HadB/RutE subfamily. Requires FMN as cofactor.

It catalyses the reaction 3-hydroxypropanoate + NADP(+) = 3-oxopropanoate + NADPH + H(+). May reduce toxic product malonic semialdehyde to 3-hydroxypropionic acid, which is excreted. The sequence is that of Probable malonic semialdehyde reductase RutE from Escherichia coli O8 (strain IAI1).